Reading from the N-terminus, the 724-residue chain is NAD(+) hydrolase SARM1 (724 aa).

A mitochondrion-targeting transit peptide spans 1–27 (MVLTLLFSAYKLCRFFTMSGPRPGADR). The tract at residues 24-56 (GADRLTVPGPDRSGGASPWWAAGGRGSREVSPG) is disordered. The span at 36–45 (SGGASPWWAA) shows a compositional bias: low complexity. One copy of the ARM 1 repeat lies at 60–100 (EVQGALERSLPELQQALSELKQASAARAVGAGLAEVFQLVE). NAD(+) contacts are provided by residues W103, R110, 149-157 (EQILVAENR), and 190-193 (HMFK). 7 ARM repeats span residues 114–153 (QGLC…QILV), 155–193 (ENRD…HMFK), 196–235 (EETC…NCAL), 237–280 (GGQT…LATN), 281–314 (KEVE…CLVD), 315–354 (ASDT…AEAA), and 359–402 (QGKT…EEVP). 2 consecutive SAM domains span residues 412-476 (WKEA…LKTF) and 486-548 (NLAD…MLHS). Phosphoserine occurs at positions 548 and 558. One can recognise a TIR domain in the interval 560–703 (DTPDVFISYR…KIIRFLQGRP (144 aa)). Residues 569–570 (RR) and E599 each bind NAD(+). The active site involves E642. Residues 703–716 (PSQDSSAGSDTSLE) show a composition bias toward polar residues. Positions 703–724 (PSQDSSAGSDTSLEGATPMGLP) are disordered.

This sequence belongs to the SARM1 family. In terms of assembly, homooctamer; forms an octameric ring via SAM domains. Interacts with TICAM1/TRIF and thereby interferes with TICAM1/TRIF function. Interacts with SDC2 (via cytoplasmic domain) and MAPK10/JNK3. In terms of processing, phosphorylation at Ser-548 by JNK kinases (MAPK8, MAPK9 and /or MAPK10) enhance the NAD(+) hydrolase (NADase) activity. Phosphorylation at Ser-548 and subsequent activation takes place in response to oxidative stress conditions and inhibits mitochondrial respiration. Widely expressed in the brain and neurons (at protein level). Expressed in photoreceptor cells of the neural retina.

The protein resides in the cytoplasm. It is found in the cell projection. It localises to the axon. The protein localises to the dendrite. Its subcellular location is the synapse. The protein resides in the mitochondrion. It carries out the reaction NAD(+) + H2O = ADP-D-ribose + nicotinamide + H(+). The enzyme catalyses NAD(+) = cyclic ADP-beta-D-ribose + nicotinamide + H(+). The catalysed reaction is NADP(+) + H2O = ADP-D-ribose 2'-phosphate + nicotinamide + H(+). Its activity is regulated as follows. Autoinhibited: in the inactive state, the enzymatic TIR domain is held apart by the autoinhibiting ARM repeats. NAD(+)-binding to ARM repeats maintains an inactive state by promoting interaction between ARM repeats and the TIR domain, thereby facilitating inhibition of the enzymatic TIR domain. Following activation, possibly by nicotinamide mononucleotide (NMN), auto-inhibitory interactions are released, allowing self-association of the TIR domains and subsequent activation of the NAD(+) hydrolase (NADase) activity. Self-association of TIR domains is facilitated by the octamer of SAM domains. Functionally, NAD(+) hydrolase, which plays a key role in axonal degeneration following injury by regulating NAD(+) metabolism. Acts as a negative regulator of MYD88- and TRIF-dependent toll-like receptor signaling pathway by promoting Wallerian degeneration, an injury-induced form of programmed subcellular death which involves degeneration of an axon distal to the injury site. Wallerian degeneration is triggered by NAD(+) depletion: in response to injury, SARM1 is activated and catalyzes cleavage of NAD(+) into ADP-D-ribose (ADPR), cyclic ADPR (cADPR) and nicotinamide; NAD(+) cleavage promoting cytoskeletal degradation and axon destruction. Also able to hydrolyze NADP(+), but not other NAD(+)-related molecules. Can activate neuronal cell death in response to stress. Regulates dendritic arborization through the MAPK4-JNK pathway. Involved in innate immune response: inhibits both TICAM1/TRIF- and MYD88-dependent activation of JUN/AP-1, TRIF-dependent activation of NF-kappa-B and IRF3, and the phosphorylation of MAPK14/p38. The polypeptide is NAD(+) hydrolase SARM1 (Mus musculus (Mouse)).